The chain runs to 599 residues: Sulfite reductase [NADPH] flavoprotein alpha-component (599 aa).

Residues 64–202 (ITIISASQTG…AASEWRARVV (139 aa)) form the Flavodoxin-like domain. FMN is bound by residues 70–75 (SQTGNA), 117–120 (STQG), and 153–162 (LGDSSYEFFC). The 215-residue stretch at 234–448 (DAPLVASLSV…IEHNDNFRLP (215 aa)) folds into the FAD-binding FR-type domain. FAD contacts are provided by residues threonine 322, alanine 356, 386-389 (RLYS), 404-406 (TVG), tyrosine 410, and 419-422 (GGAS). NADP(+) contacts are provided by residues 519-520 (SR), 525-529 (KVYVQ), and aspartate 561. Tyrosine 599 contacts FAD.

The protein belongs to the NADPH-dependent sulphite reductase flavoprotein subunit CysJ family. In the N-terminal section; belongs to the flavodoxin family. This sequence in the C-terminal section; belongs to the flavoprotein pyridine nucleotide cytochrome reductase family. In terms of assembly, alpha(8)-beta(8). The alpha component is a flavoprotein, the beta component is a hemoprotein. The cofactor is FAD. FMN is required as a cofactor.

The enzyme catalyses hydrogen sulfide + 3 NADP(+) + 3 H2O = sulfite + 3 NADPH + 4 H(+). The protein operates within sulfur metabolism; hydrogen sulfide biosynthesis; hydrogen sulfide from sulfite (NADPH route): step 1/1. Component of the sulfite reductase complex that catalyzes the 6-electron reduction of sulfite to sulfide. This is one of several activities required for the biosynthesis of L-cysteine from sulfate. The flavoprotein component catalyzes the electron flow from NADPH -&gt; FAD -&gt; FMN to the hemoprotein component. In Shigella dysenteriae serotype 1 (strain Sd197), this protein is Sulfite reductase [NADPH] flavoprotein alpha-component.